Consider the following 225-residue polypeptide: Protein E26 (225 aa).

Interacts with proteins IE0 and IE1. Interacts with protein FP25K. Interacts with host importin alpha-16. Palmitoylated.

The protein localises to the host nucleus inner membrane. The protein resides in the virion. It localises to the host cytoplasm. It is found in the host nucleus. Plays a role in the sorting of ODV envelope proteins to the host inner nuclear membrane. May facilitate the fusion and release of nucleocapsids into the cytoplasm. Modulates the expression levels of IE0 and IE1. In Lepidoptera (butterflies and moths), this protein is Protein E26 (DA26).